Here is a 186-residue protein sequence, read N- to C-terminus: Superoxide dismutase [Cu-Zn] (186 aa).

An N-terminal signal peptide occupies residues 1–20 (MKKTVLALMFSCGMVASAFA). Cu cation is bound by residues His79, His81, and His104. An intrachain disulfide couples Cys86 to Cys182. Zn(2+)-binding residues include His104, His113, His122, and Asp125. Position 160 (His160) interacts with Cu cation.

Belongs to the Cu-Zn superoxide dismutase family. Homodimer. Cu cation serves as cofactor. The cofactor is Zn(2+).

It localises to the periplasm. It catalyses the reaction 2 superoxide + 2 H(+) = H2O2 + O2. Destroys radicals which are normally produced within the cells and which are toxic to biological systems. The sequence is that of Superoxide dismutase [Cu-Zn] (sodC) from Pasteurella multocida (strain Pm70).